Reading from the N-terminus, the 151-residue chain is Superoxide dismutase [Cu-Zn] A (151 aa).

The S-palmitoyl cysteine moiety is linked to residue Cys-6. Residues His-45, His-47, and His-62 each coordinate Cu cation. A disulfide bridge connects residues Cys-56 and Cys-144. Zn(2+) is bound by residues His-62, His-70, His-79, and Asp-82. His-118 provides a ligand contact to Cu cation.

The protein belongs to the Cu-Zn superoxide dismutase family. As to quaternary structure, homodimer, and heterodimer of Superoxide dismutase [Cu-Zn] A and B. It depends on Cu cation as a cofactor. Zn(2+) is required as a cofactor.

Its subcellular location is the cytoplasm. It is found in the nucleus. The catalysed reaction is 2 superoxide + 2 H(+) = H2O2 + O2. Its function is as follows. Destroys radicals which are normally produced within the cells and which are toxic to biological systems. This Xenopus laevis (African clawed frog) protein is Superoxide dismutase [Cu-Zn] A (sod1-a).